The following is a 95-amino-acid chain: SMAD5 antisense gene protein 1 (95 aa).

Disordered stretches follow at residues 1 to 24 (MHKQ…SSWS) and 43 to 70 (SSPT…KPAN). The span at 7-19 (LLPPPATPPPPPQ) shows a compositional bias: pro residues.

As to expression, expressed in fetal tissues.

The sequence is that of SMAD5 antisense gene protein 1 (SMAD5-AS1) from Homo sapiens (Human).